The primary structure comprises 453 residues: Adenylyltransferase and sulfurtransferase MOCS3 (453 aa).

Threonine 62 carries the phosphothreonine modification. Residues glycine 101, aspartate 122, serine 129–arginine 133, lysine 146, and aspartate 190–asparagine 191 contribute to the ATP site. Positions 231 and 234 each coordinate Zn(2+). The active-site Glycyl thioester intermediate; for adenylyltransferase activity is the cysteine 248. Zn(2+) contacts are provided by cysteine 306 and cysteine 309. The Rhodanese domain occupies glutamine 355–proline 451. The active-site Cysteine persulfide intermediate; for sulfurtransferase activity is cysteine 410.

This sequence in the N-terminal section; belongs to the HesA/MoeB/ThiF family. UBA4 subfamily. Requires Zn(2+) as cofactor.

It localises to the cytoplasm. The protein resides in the cytosol. It carries out the reaction [molybdopterin-synthase sulfur-carrier protein]-C-terminal Gly-Gly + ATP + H(+) = [molybdopterin-synthase sulfur-carrier protein]-C-terminal Gly-Gly-AMP + diphosphate. It catalyses the reaction [molybdopterin-synthase sulfur-carrier protein]-C-terminal Gly-Gly-AMP + S-sulfanyl-L-cysteinyl-[cysteine desulfurase] + AH2 = [molybdopterin-synthase sulfur-carrier protein]-C-terminal-Gly-aminoethanethioate + L-cysteinyl-[cysteine desulfurase] + A + AMP + 2 H(+). It participates in tRNA modification; 5-methoxycarbonylmethyl-2-thiouridine-tRNA biosynthesis. Its pathway is cofactor biosynthesis; molybdopterin biosynthesis. In terms of biological role, plays a central role in 2-thiolation of mcm(5)S(2)U at tRNA wobble positions of cytosolic tRNA(Lys), tRNA(Glu) and tRNA(Gln). Also essential during biosynthesis of the molybdenum cofactor. Acts by mediating the C-terminal thiocarboxylation of sulfur carriers URM1 and MOCS2A. Its N-terminus first activates URM1 and MOCS2A as acyl-adenylates (-COAMP), then the persulfide sulfur on the catalytic cysteine is transferred to URM1 and MOCS2A to form thiocarboxylation (-COSH) of their C-terminus. The reaction probably involves hydrogen sulfide that is generated from the persulfide intermediate and that acts as a nucleophile towards URM1 and MOCS2A. Subsequently, a transient disulfide bond is formed. Does not use thiosulfate as sulfur donor; NFS1 probably acting as a sulfur donor for thiocarboxylation reactions. This is Adenylyltransferase and sulfurtransferase MOCS3 from Drosophila sechellia (Fruit fly).